A 563-amino-acid polypeptide reads, in one-letter code: Choline transporter (563 aa).

Residues 1 to 25 are disordered; it reads MSIRNDNASGGYMQPDQSSNASMHK. The Extracellular portion of the chain corresponds to 1-57; that stretch reads MSIRNDNASGGYMQPDQSSNASMHKRDLRVEEEIKPLDDMDSKGAVAADGEVHLRKS. N-linked (GlcNAc...) asparagine glycosylation is found at asparagine 7 and asparagine 20. Serine 22 and serine 42 each carry phosphoserine. The chain crosses the membrane as a helical span at residues 58–78; the sequence is FSLWSILGVGFGLTNSWFGIS. Topologically, residues 79-87 are cytoplasmic; that stretch reads TSMVAGISS. The helical transmembrane segment at 88–108 threads the bilayer; the sequence is GGPMMIVYGIIIVALISICIG. At 109 to 182 the chain is on the extracellular side; the sequence is TSLGELSSAY…LTHPEFIPKR (74 aa). Residues 183–203 traverse the membrane as a helical segment; sequence WHIFVCFELLHLFLMFFNCYG. The Cytoplasmic segment spans residues 204–205; sequence KS. Residues 206–226 form a helical membrane-spanning segment; it reads LPIISSSSLYISLLSFFTITI. Residues 227–255 are Extracellular-facing; sequence TVLACSHGKFNDAKFVFATFNNETGWKNG. Asparagine 248 carries an N-linked (GlcNAc...) asparagine glycan. Residues 256–276 traverse the membrane as a helical segment; the sequence is GIAFIVGLINPAWSFSCLDCA. The Cytoplasmic segment spans residues 277–293; that stretch reads THMAFEVEKPERVIPIA. A helical membrane pass occupies residues 294-314; the sequence is IMGTVAIGFVTSFCYVIAMFF. At 315–342 the chain is on the extracellular side; that stretch reads SIQDLDAVLSSTTGAPILDIYNQALGNK. Asparagine 341 carries N-linked (GlcNAc...) asparagine glycosylation. Residues 343–363 form a helical membrane-spanning segment; it reads SGAIFLGCLILFTSFGCVIAC. The Cytoplasmic portion of the chain corresponds to 364–398; it reads HTWQARLCWSFARDNGLPLSRLWSQVNPHTGVPLN. A helical membrane pass occupies residues 399 to 417; the sequence is AHLMSCAWITLIGLLYLAS. At 418 to 426 the chain is on the extracellular side; that stretch reads STAFQSLIT. A helical transmembrane segment spans residues 427 to 445; the sequence is GCIAFLLLSYIIPVICLLA. Residues 446–465 are Cytoplasmic-facing; it reads KKRNIAHGPFWLGKFGFFSN. Residues 466–486 traverse the membrane as a helical segment; it reads IVLLGWTVFSVVFFSFPPVLP. Residues 487–491 lie on the Extracellular side of the membrane; that stretch reads VTKDN. Residues 492–512 form a helical membrane-spanning segment; that stretch reads MNYVCVVIVGYTAYSILYWKY. At 513–563 the chain is on the cytoplasmic side; it reads KGKKEFHALEESENEQAEYSNNFDTIEDSREFSVAASDVELENEHVPWGKK.

This sequence belongs to the amino acid-polyamine-organocation (APC) superfamily. Amino acid/choline transporter (ACT) (TC 2.A.3.4) family.

The protein localises to the membrane. The enzyme catalyses choline(out) = choline(in). It carries out the reaction ethanolamine(in) = ethanolamine(out). In terms of biological role, sole choline transporter in yeast. Also transports ethanolamine. This Saccharomyces cerevisiae (strain ATCC 204508 / S288c) (Baker's yeast) protein is Choline transporter (HNM1).